Here is a 590-residue protein sequence, read N- to C-terminus: Zinc finger protein 703 (590 aa).

Polar residues predominate over residues 1–14; the sequence is MSDSPAGSNPRTPE. Disordered stretches follow at residues 1–43, 96–293, and 341–366; these read MSDS…DPLR, CSQI…AGHV, and LVGG…LTGA. Residue Ser-2 is modified to N-acetylserine. 4 stretches are compositionally biased toward low complexity: residues 27 to 37, 128 to 139, 171 to 189, and 207 to 219; these read PAVPAAVSLLP, RSAPGAASAAAA, GSSS…PGDK, and APVS…SSPG. Residues 241–251 show a composition bias toward basic and acidic residues; that stretch reads ELDKKDQEPKP. Ser-252 bears the Phosphoserine mark. Gly residues-rich tracts occupy residues 260-273 and 341-352; these read RGGG…GGAE and LVGGQLSGGLGL. The C2H2-type zinc-finger motif lies at 456 to 484; that stretch reads HSCNWVAASGPCDKRFATSEELLSHLRTH. Position 580 is an omega-N-methylarginine (Arg-580).

The protein belongs to the Elbow/Noc family. In terms of assembly, interacts with TLE4; increases transcriptional repression. Interacts with DCAF7 and PHB2. May interact with HSPD1. As to expression, expressed in mammary epithelium.

It is found in the nucleus. The protein resides in the cytoplasm. Transcriptional corepressor which does not bind directly to DNA and may regulate transcription through recruitment of histone deacetylases to gene promoters. Regulates cell adhesion, migration and proliferation. May be required for segmental gene expression during hindbrain development. This is Zinc finger protein 703 (ZNF703) from Homo sapiens (Human).